Consider the following 106-residue polypeptide: Insulin-like peptide 03 (106 aa).

The signal sequence occupies residues 1-18 (MLFYFGLAVIFLIDSSQT). The propeptide occupies 19–34 (QTLYKVNEVGGSQVDR). 3 disulfide bridges follow: Cys-37/Cys-93, Cys-49/Cys-106, and Cys-92/Cys-97. Positions 52–82 (KKRQNIPRKYGRDPNNILEKEEFAKRFLRVR) are cleaved as a propeptide — c peptide.

This sequence belongs to the insulin family.

Its subcellular location is the secreted. Functionally, insulin decreases blood glucose concentration. May have evolved to activate insulin receptors (INSR) in vertebrates. Molecular docking studies reveals unique interaction with the human insulin receptor. In vivo, insulin-like peptide injection reduces blood glucose levels in two models of zebrafish diabetes (streptozotocin- and glucose-induced). Also shorter swimming distance of zebrafish larvae, an effect which is not observed with human insulin. The sequence is that of Insulin-like peptide 03 from Exaiptasia diaphana (Tropical sea anemone).